A 51-amino-acid polypeptide reads, in one-letter code: Large ribosomal subunit protein eL39 (51 aa).

The protein belongs to the eukaryotic ribosomal protein eL39 family.

In Methanococcus aeolicus (strain ATCC BAA-1280 / DSM 17508 / OCM 812 / Nankai-3), this protein is Large ribosomal subunit protein eL39.